We begin with the raw amino-acid sequence, 477 residues long: 3-isopropylmalate dehydratase large subunit 1 (477 aa).

C357, C417, and C420 together coordinate [4Fe-4S] cluster.

This sequence belongs to the aconitase/IPM isomerase family. LeuC type 1 subfamily. As to quaternary structure, heterodimer of LeuC and LeuD. [4Fe-4S] cluster serves as cofactor.

It catalyses the reaction (2R,3S)-3-isopropylmalate = (2S)-2-isopropylmalate. It functions in the pathway amino-acid biosynthesis; L-leucine biosynthesis; L-leucine from 3-methyl-2-oxobutanoate: step 2/4. In terms of biological role, catalyzes the isomerization between 2-isopropylmalate and 3-isopropylmalate, via the formation of 2-isopropylmaleate. This Bradyrhizobium diazoefficiens (strain JCM 10833 / BCRC 13528 / IAM 13628 / NBRC 14792 / USDA 110) protein is 3-isopropylmalate dehydratase large subunit 1.